Reading from the N-terminus, the 404-residue chain is V-set and immunoglobulin domain-containing protein 1 (404 aa).

Positions 1 to 22 are cleaved as a signal peptide; sequence MMVFAFWKVFLILNCLAGQVNM. Residues 23–133 form the Ig-like V-type domain; sequence VQVTIPDTFV…DFFGKNQGIL (111 aa). Residues 23–233 lie on the Extracellular side of the membrane; it reads VQVTIPDTFV…EIDLTSSDPE (211 aa). The N-linked (GlcNAc...) asparagine glycan is linked to asparagine 39. Intrachain disulfides connect cysteine 44/cysteine 117 and cysteine 162/cysteine 212. The 88-residue stretch at 141-228 folds into the Ig-like C2-type domain; that stretch reads PSKPFCSIQG…GNSSCEIDLT (88 aa). N-linked (GlcNAc...) asparagine glycosylation is found at asparagine 201 and asparagine 220. Residues 234–254 form a helical membrane-spanning segment; that stretch reads VGIIIGALVGALTGAAIIICV. The Cytoplasmic portion of the chain corresponds to 255-404; that stretch reads VYFARNKVKS…REEEKETVKA (150 aa). Disordered regions lie at residues 266 to 285 and 298 to 404; these read QKNL…HHSR and EGTL…TVKA. Phosphoserine is present on residues serine 271 and serine 272. Polar residues predominate over residues 301–314; the sequence is LPSSIHASHNTEPT. Positions 357-383 are enriched in acidic residues; sequence MELEPETEPEPEPEPEPQPELESELEP. The segment covering 393–404 has biased composition (basic and acidic residues); that stretch reads PMREEEKETVKA.

The protein resides in the membrane. This is V-set and immunoglobulin domain-containing protein 1 (Vsig1) from Rattus norvegicus (Rat).